The sequence spans 416 residues: Histidine--tRNA ligase (416 aa).

Belongs to the class-II aminoacyl-tRNA synthetase family. As to quaternary structure, homodimer.

It is found in the cytoplasm. It catalyses the reaction tRNA(His) + L-histidine + ATP = L-histidyl-tRNA(His) + AMP + diphosphate + H(+). The protein is Histidine--tRNA ligase of Dictyoglomus thermophilum (strain ATCC 35947 / DSM 3960 / H-6-12).